The following is a 420-amino-acid chain: Subtilisin (420 aa).

An N-terminal signal peptide occupies residues 1 to 31 (MKRSGKIFTTAMLAVTLMMPAMGVSANEGNA). The propeptide occupies 32–111 (AAEGNEKFRV…DKPEALYNAM (80 aa)). Glutamine 115 is a binding site for Ca(2+). A Peptidase S8 domain is found at 118–420 (PWGIKAIYNN…ASGFGFATVQ (303 aa)). Aspartate 145 serves as the catalytic Charge relay system. A Ca(2+)-binding site is contributed by aspartate 154. Catalysis depends on charge relay system residues histidine 182 and serine 360.

Belongs to the peptidase S8 family. Requires Ca(2+) as cofactor.

It localises to the secreted. The enzyme catalyses Hydrolysis of proteins with broad specificity for peptide bonds, and a preference for a large uncharged residue in P1. Hydrolyzes peptide amides.. Functionally, subtilisin is an extracellular alkaline serine protease, it catalyzes the hydrolysis of proteins and peptide amides. The chain is Subtilisin (sub1) from Bacillus sp. (strain TA39).